Consider the following 233-residue polypeptide: MAKLTKRMRNIREKVEVTKQYEIAEAVALLKELATAKFVESVDVAVNLGIDARKSDQNVRGATVLPHGTGRSVRVAVFAQGANAEAAKEAGAELVGMDDLAAKVKAGEMDFDVVIASPDAMRVVGQLGQILGPRGLMPNPKVGTVTPNVAEAVKNAKAGQVRYRNDKNGIIHTTIGKVVSTKHKLKENLEALLVALKKAKPSAAKGVYIKKVSLSTTMGAGVAIDQASLSATV.

Belongs to the universal ribosomal protein uL1 family. In terms of assembly, part of the 50S ribosomal subunit.

Binds directly to 23S rRNA. The L1 stalk is quite mobile in the ribosome, and is involved in E site tRNA release. In terms of biological role, protein L1 is also a translational repressor protein, it controls the translation of the L11 operon by binding to its mRNA. The protein is Large ribosomal subunit protein uL1 of Proteus vulgaris.